A 460-amino-acid chain; its full sequence is ATP synthase subunit beta (460 aa).

ATP is bound at residue 149–156 (GGAGVGKT).

It belongs to the ATPase alpha/beta chains family. In terms of assembly, F-type ATPases have 2 components, CF(1) - the catalytic core - and CF(0) - the membrane proton channel. CF(1) has five subunits: alpha(3), beta(3), gamma(1), delta(1), epsilon(1). CF(0) has three main subunits: a(1), b(2) and c(9-12). The alpha and beta chains form an alternating ring which encloses part of the gamma chain. CF(1) is attached to CF(0) by a central stalk formed by the gamma and epsilon chains, while a peripheral stalk is formed by the delta and b chains.

The protein resides in the cell inner membrane. It catalyses the reaction ATP + H2O + 4 H(+)(in) = ADP + phosphate + 5 H(+)(out). Produces ATP from ADP in the presence of a proton gradient across the membrane. The catalytic sites are hosted primarily by the beta subunits. The sequence is that of ATP synthase subunit beta from Nitrosomonas europaea (strain ATCC 19718 / CIP 103999 / KCTC 2705 / NBRC 14298).